We begin with the raw amino-acid sequence, 446 residues long: Exodeoxyribonuclease 7 large subunit (446 aa).

The protein belongs to the XseA family. In terms of assembly, heterooligomer composed of large and small subunits.

It localises to the cytoplasm. It carries out the reaction Exonucleolytic cleavage in either 5'- to 3'- or 3'- to 5'-direction to yield nucleoside 5'-phosphates.. In terms of biological role, bidirectionally degrades single-stranded DNA into large acid-insoluble oligonucleotides, which are then degraded further into small acid-soluble oligonucleotides. This chain is Exodeoxyribonuclease 7 large subunit, found in Streptococcus thermophilus (strain ATCC BAA-250 / LMG 18311).